A 280-amino-acid chain; its full sequence is Nitrogenase iron protein (280 aa).

8 to 15 (GKGGIGKS) is a binding site for ATP. C95 lines the [4Fe-4S] cluster pocket. ADP-ribosylarginine; by dinitrogenase reductase ADP-ribosyltransferase is present on R98. A [4Fe-4S] cluster-binding site is contributed by C128.

This sequence belongs to the NifH/BchL/ChlL family. Homodimer. [4Fe-4S] cluster is required as a cofactor. The reversible ADP-ribosylation of Arg-98 inactivates the nitrogenase reductase and regulates nitrogenase activity.

It carries out the reaction N2 + 8 reduced [2Fe-2S]-[ferredoxin] + 16 ATP + 16 H2O = H2 + 8 oxidized [2Fe-2S]-[ferredoxin] + 2 NH4(+) + 16 ADP + 16 phosphate + 6 H(+). Its function is as follows. The key enzymatic reactions in nitrogen fixation are catalyzed by the nitrogenase complex, which has 2 components: the iron protein and the molybdenum-iron protein. This Methanospirillum hungatei JF-1 (strain ATCC 27890 / DSM 864 / NBRC 100397 / JF-1) protein is Nitrogenase iron protein.